The following is a 451-amino-acid chain: Phosphoglucosamine mutase (451 aa).

Residue serine 103 is the Phosphoserine intermediate of the active site. 4 residues coordinate Mg(2+): serine 103, aspartate 243, aspartate 245, and aspartate 247. The residue at position 103 (serine 103) is a Phosphoserine.

This sequence belongs to the phosphohexose mutase family. Mg(2+) is required as a cofactor. Activated by phosphorylation.

It catalyses the reaction alpha-D-glucosamine 1-phosphate = D-glucosamine 6-phosphate. Its function is as follows. Catalyzes the conversion of glucosamine-6-phosphate to glucosamine-1-phosphate. The sequence is that of Phosphoglucosamine mutase from Levilactobacillus brevis (strain ATCC 367 / BCRC 12310 / CIP 105137 / JCM 1170 / LMG 11437 / NCIMB 947 / NCTC 947) (Lactobacillus brevis).